Here is a 360-residue protein sequence, read N- to C-terminus: Peptide chain release factor 1 (360 aa).

Gln-235 carries the post-translational modification N5-methylglutamine.

Belongs to the prokaryotic/mitochondrial release factor family. In terms of processing, methylated by PrmC. Methylation increases the termination efficiency of RF1.

Its subcellular location is the cytoplasm. Its function is as follows. Peptide chain release factor 1 directs the termination of translation in response to the peptide chain termination codons UAG and UAA. This chain is Peptide chain release factor 1, found in Cupriavidus taiwanensis (strain DSM 17343 / BCRC 17206 / CCUG 44338 / CIP 107171 / LMG 19424 / R1) (Ralstonia taiwanensis (strain LMG 19424)).